The primary structure comprises 347 residues: Holliday junction branch migration complex subunit RuvB (347 aa).

Positions 1-182 (MSAQNPVLTP…FGIPVRLSFY (182 aa)) are large ATPase domain (RuvB-L). Residues L21, R22, G63, K66, T67, T68, 129–131 (EDF), R172, Y182, and R219 contribute to the ATP site. T67 is a Mg(2+) binding site. The tract at residues 183-253 (TVEELELIVR…IADEALTRLL (71 aa)) is small ATPAse domain (RuvB-S). Positions 256-347 (NMGLDQLDTR…QFRLTLEDDD (92 aa)) are head domain (RuvB-H). DNA contacts are provided by R292, R311, and R316.

Belongs to the RuvB family. As to quaternary structure, homohexamer. Forms an RuvA(8)-RuvB(12)-Holliday junction (HJ) complex. HJ DNA is sandwiched between 2 RuvA tetramers; dsDNA enters through RuvA and exits via RuvB. An RuvB hexamer assembles on each DNA strand where it exits the tetramer. Each RuvB hexamer is contacted by two RuvA subunits (via domain III) on 2 adjacent RuvB subunits; this complex drives branch migration. In the full resolvosome a probable DNA-RuvA(4)-RuvB(12)-RuvC(2) complex forms which resolves the HJ.

The protein resides in the cytoplasm. It carries out the reaction ATP + H2O = ADP + phosphate + H(+). Its function is as follows. The RuvA-RuvB-RuvC complex processes Holliday junction (HJ) DNA during genetic recombination and DNA repair, while the RuvA-RuvB complex plays an important role in the rescue of blocked DNA replication forks via replication fork reversal (RFR). RuvA specifically binds to HJ cruciform DNA, conferring on it an open structure. The RuvB hexamer acts as an ATP-dependent pump, pulling dsDNA into and through the RuvAB complex. RuvB forms 2 homohexamers on either side of HJ DNA bound by 1 or 2 RuvA tetramers; 4 subunits per hexamer contact DNA at a time. Coordinated motions by a converter formed by DNA-disengaged RuvB subunits stimulates ATP hydrolysis and nucleotide exchange. Immobilization of the converter enables RuvB to convert the ATP-contained energy into a lever motion, pulling 2 nucleotides of DNA out of the RuvA tetramer per ATP hydrolyzed, thus driving DNA branch migration. The RuvB motors rotate together with the DNA substrate, which together with the progressing nucleotide cycle form the mechanistic basis for DNA recombination by continuous HJ branch migration. Branch migration allows RuvC to scan DNA until it finds its consensus sequence, where it cleaves and resolves cruciform DNA. The polypeptide is Holliday junction branch migration complex subunit RuvB (Allorhizobium ampelinum (strain ATCC BAA-846 / DSM 112012 / S4) (Agrobacterium vitis (strain S4))).